A 189-amino-acid chain; its full sequence is Apolipoprotein D (189 aa).

Residues 1–20 form the signal peptide; it reads MVPVLLLLPALAGLFGAAEG. Gln21 carries the post-translational modification Pyrrolidone carboxylic acid. 2 disulfides stabilise this stretch: Cys28–Cys134 and Cys61–Cys185. 2 N-linked (GlcNAc...) asparagine glycosylation sites follow: Asn65 and Asn98.

Belongs to the calycin superfamily. Lipocalin family. As to quaternary structure, homodimer.

The protein localises to the secreted. APOD occurs in the macromolecular complex with lecithin-transport and binding of bilin. Appears to be able to transport a variety of ligands in a number of different contexts. This Bos taurus (Bovine) protein is Apolipoprotein D (APOD).